The primary structure comprises 27 residues: Toxin Bcg III 21.00 (27 aa).

The protein localises to the secreted. It is found in the nematocyst. Possible voltage-gated potassium channel (Kv) blocker. The polypeptide is Toxin Bcg III 21.00 (Bunodosoma cangicum (Sea anemone)).